The chain runs to 117 residues: Large ribosomal subunit protein bL20 (117 aa).

It belongs to the bacterial ribosomal protein bL20 family.

In terms of biological role, binds directly to 23S ribosomal RNA and is necessary for the in vitro assembly process of the 50S ribosomal subunit. It is not involved in the protein synthesizing functions of that subunit. This is Large ribosomal subunit protein bL20 from Vibrio atlanticus (strain LGP32) (Vibrio splendidus (strain Mel32)).